The primary structure comprises 260 residues: Transforming acid coiled-coil-containing protein 1 (260 aa).

Residues 1 to 43 (MSLNTTFTKEDGTEVVIPFNGSQNGHPENEEPEVEEAAEPSSS) are disordered. Residues 108 to 249 (ASSEELEKAL…CDQLLNDVDV (142 aa)) adopt a coiled-coil conformation.

This sequence belongs to the TACC family. As to quaternary structure, interacts with zyg-9 to form a heterodimer. Interacts with zyg-8 to form a heterodimer. Interacts with efa-6 (via N-terminus). As to expression, expressed in touch neurons.

The protein resides in the cytoplasm. It is found in the cytoskeleton. It localises to the spindle pole. Its subcellular location is the microtubule organizing center. The protein localises to the centrosome. The protein resides in the chromosome. It is found in the centromere. It localises to the kinetochore. Its subcellular location is the cell projection. The protein localises to the axon. The protein resides in the perikaryon. Involved in microtubule formation, polymerization and assembly, regulating microtubule nucleation and length. Plays a role in pronuclear migration and mitotic and meiotic spindle elongation during early embryogenesis. In complex with zyg-9, functions during the early stages of embryonic development to regulate microtubule assembly throughout the cell cycle. Specifically, the complex is required for the formation and growth of astral microtubules and spindle microtubules during mitotic spindle assembly. At anaphase, the complex is required for mitotic spindle positioning in one-cell stage embryos. The complex acts in a partially redundant manner with the tac-1/zyg-8 complex to regulate microtubule assembly and processes during interphase, mitosis and meiosis in embryos. Plays a role in injury-induced axonal regrowth, regeneration and microtubule stability in PLM neurons and this may be downstream of efa-6. This Caenorhabditis elegans protein is Transforming acid coiled-coil-containing protein 1.